An 859-amino-acid polypeptide reads, in one-letter code: DNA mismatch repair protein MutS (859 aa).

618–625 (GPNMGGKS) contacts ATP.

Belongs to the DNA mismatch repair MutS family.

Functionally, this protein is involved in the repair of mismatches in DNA. It is possible that it carries out the mismatch recognition step. This protein has a weak ATPase activity. The chain is DNA mismatch repair protein MutS from Shewanella halifaxensis (strain HAW-EB4).